The primary structure comprises 1166 residues: IQ domain-containing protein N (1166 aa).

Positions 1 to 19 (MQPATQLQFTNHLSPNGQC) are enriched in polar residues. The disordered stretch occupies residues 1 to 56 (MQPATQLQFTNHLSPNGQCILQPPPTPSLPDKMEKAPPQPQHEGLKSEEHLPQQPA). One can recognise an IQ 1 domain in the interval 89–118 (HARAATLIQANWRGYRLRQKLISQMTAAKA). Disordered regions lie at residues 431-450 (VCPGPAMAKTPPQTHPVATP), 769-797 (LSAPPWAKPEDRWTQPKPHGHVPGKTTQG), and 829-848 (DSGATRAQPSMPSQVVPCQE). 5 consecutive IQ domains span residues 907-932 (AVTTIQAGVRGYLVRRRIRVWHRRAT), 928-955 (HRRATVIQATWRGYRMRRNLAHLCRATT), 952-979 (RATTIIQAAWRGYSTRRDQARHRQMLHP), 1091-1119 (RDKAATAIQSAWRGFKIRQQMRQQQMAAK), and 1114-1143 (QQMAAKMVQATWRGHHTRSCLKSTEALLGP). A disordered region spans residues 1145–1166 (DPWSSSQHMHWASSQHTHWPGI). Residues 1147-1166 (WSSSQHMHWASSQHTHWPGI) show a composition bias toward polar residues.

Interacts with calmodulin.

Its function is as follows. Essential for spermiogenesis and fertilization. May be required for manchette assembly in elongating spermatids. The polypeptide is IQ domain-containing protein N (IQCN) (Macaca fascicularis (Crab-eating macaque)).